Reading from the N-terminus, the 97-residue chain is Putative pterin-4-alpha-carbinolamine dehydratase (97 aa).

The protein belongs to the pterin-4-alpha-carbinolamine dehydratase family.

It carries out the reaction (4aS,6R)-4a-hydroxy-L-erythro-5,6,7,8-tetrahydrobiopterin = (6R)-L-erythro-6,7-dihydrobiopterin + H2O. The chain is Putative pterin-4-alpha-carbinolamine dehydratase from Christiangramia forsetii (strain DSM 17595 / CGMCC 1.15422 / KT0803) (Gramella forsetii).